Here is a 430-residue protein sequence, read N- to C-terminus: Adenylosuccinate synthetase (430 aa).

Residues 13-19 (GDEGKGK) and 41-43 (GHT) each bind GTP. The active-site Proton acceptor is aspartate 14. 2 residues coordinate Mg(2+): aspartate 14 and glycine 41. IMP contacts are provided by residues 14-17 (DEGK), 39-42 (NAGH), threonine 130, arginine 144, glutamine 225, threonine 240, and arginine 304. Histidine 42 functions as the Proton donor in the catalytic mechanism. A substrate-binding site is contributed by 300–306 (STTGRAR). GTP is bound by residues arginine 306, 332-334 (KLD), and 414-416 (STG).

The protein belongs to the adenylosuccinate synthetase family. Homodimer. Mg(2+) is required as a cofactor.

Its subcellular location is the cytoplasm. The enzyme catalyses IMP + L-aspartate + GTP = N(6)-(1,2-dicarboxyethyl)-AMP + GDP + phosphate + 2 H(+). The protein operates within purine metabolism; AMP biosynthesis via de novo pathway; AMP from IMP: step 1/2. Plays an important role in the de novo pathway of purine nucleotide biosynthesis. Catalyzes the first committed step in the biosynthesis of AMP from IMP. In Alcanivorax borkumensis (strain ATCC 700651 / DSM 11573 / NCIMB 13689 / SK2), this protein is Adenylosuccinate synthetase.